The primary structure comprises 60 residues: Large ribosomal subunit protein bL32 (60 aa).

The interval 1 to 60 (MAVQQNKKSRSARDMRRSHDALEASTLSVEKSTGEVHLRHHVSPEGVYRGRKVIDKGADE) is disordered. Residues 11–22 (SARDMRRSHDAL) are compositionally biased toward basic and acidic residues.

It belongs to the bacterial ribosomal protein bL32 family.

The protein is Large ribosomal subunit protein bL32 of Ectopseudomonas mendocina (strain ymp) (Pseudomonas mendocina).